The primary structure comprises 631 residues: 1-deoxy-D-xylulose-5-phosphate synthase (631 aa).

Thiamine diphosphate-binding positions include H87 and 128–130; that span reads GHS. Residue D159 coordinates Mg(2+). Thiamine diphosphate-binding positions include 160–161, N188, F295, and E378; that span reads GA. Residue N188 participates in Mg(2+) binding.

This sequence belongs to the transketolase family. DXPS subfamily. As to quaternary structure, homodimer. The cofactor is Mg(2+). Thiamine diphosphate is required as a cofactor.

The enzyme catalyses D-glyceraldehyde 3-phosphate + pyruvate + H(+) = 1-deoxy-D-xylulose 5-phosphate + CO2. Its pathway is metabolic intermediate biosynthesis; 1-deoxy-D-xylulose 5-phosphate biosynthesis; 1-deoxy-D-xylulose 5-phosphate from D-glyceraldehyde 3-phosphate and pyruvate: step 1/1. Catalyzes the acyloin condensation reaction between C atoms 2 and 3 of pyruvate and glyceraldehyde 3-phosphate to yield 1-deoxy-D-xylulose-5-phosphate (DXP). This Pseudomonas syringae pv. tomato (strain ATCC BAA-871 / DC3000) protein is 1-deoxy-D-xylulose-5-phosphate synthase.